We begin with the raw amino-acid sequence, 383 residues long: MFWTFKEWFWLERFWLPPTIKWSDLEDHDGLVFVKPSHLYVTIPYAFLLLIIRRVFEKFVASPLAKSFGIKETVRKVTPNTVLENFFKHSTRQPLQTDIYGLAKKCNLTERQVERWFRSRRNQERPSRLKKFQEACWRFAFYLMITVAGIAFLYDKPWLYDLWEVWNGYPKQPLLPSQYWYYILEMSFYWSLLFRLGFDVKRKDFLAHIIHHLAAISLMSFSWCANYIRSGTLVMIVHDVADIWLESAKMFSYAGWTQTCNTLFFIFSTIFFISRLIVFPFWILYCTLILPMYHLEPFFSYIFLNLQLMILQVLHLYWGYYILKMLNRCIFMKSIQDVRSDDEDYEEEEEEEEEEATKGKEMDCLKNGLRAERHLIPNGQHGH.

Residues 32-52 traverse the membrane as a helical segment; sequence VFVKPSHLYVTIPYAFLLLII. The interval 66 to 127 is homeobox-like; it reads KSFGIKETVR…RSRRNQERPS (62 aa). The TLC domain maps to 130–331; that stretch reads KKFQEACWRF…ILKMLNRCIF (202 aa). Helical transmembrane passes span 139-159, 174-194, 205-225, 264-284, and 298-318; these read FAFYLMITVAGIAFLYDKPWL, LLPSQYWYYILEMSFYWSLLF, FLAHIIHHLAAISLMSFSWCA, FFIFSTIFFISRLIVFPFWIL, and FFSYIFLNLQLMILQVLHLYW. Topologically, residues 319 to 383 are cytoplasmic; sequence GYYILKMLNR…HLIPNGQHGH (65 aa). Serine 340 carries the phosphoserine modification. The span at 342–355 shows a compositional bias: acidic residues; that stretch reads DEDYEEEEEEEEEE. The segment at 342 to 363 is disordered; it reads DEDYEEEEEEEEEEATKGKEMD.

In terms of tissue distribution, expressed in the epidermis, where it localizes at the interface between the stratum granulosum and the stratum corneum (at protein level).

The protein resides in the endoplasmic reticulum membrane. The enzyme catalyses a very long-chain fatty acyl-CoA + a sphingoid base = an N-(very-long-chain fatty acyl)-sphingoid base + CoA + H(+). It carries out the reaction docosanoyl-CoA + sphinganine = N-docosanoylsphinganine + CoA + H(+). The catalysed reaction is tetracosanoyl-CoA + sphinganine = N-tetracosanoylsphinganine + CoA + H(+). It catalyses the reaction hexacosanoyl-CoA + sphinganine = N-hexacosanoylsphinganine + CoA + H(+). The enzyme catalyses 2-hydroxydocosanoyl-CoA + sphinganine = N-(2-hydroxydocosanoyl)-sphinganine + CoA + H(+). It carries out the reaction 2-hydroxytetracosanoyl-CoA + sphinganine = N-(2-hydroxytetracosanoyl)-sphinganine + CoA + H(+). The catalysed reaction is an ultra-long-chain fatty acyl-CoA + a sphingoid base = an N-(ultra-long-chain-acyl)-sphingoid base + CoA + H(+). It catalyses the reaction octacosanoyl-CoA + sphinganine = N-(octacosanoyl)-sphinganine + CoA + H(+). The enzyme catalyses a fatty acyl-CoA + sphing-4-enine = an N-acylsphing-4-enine + CoA + H(+). It carries out the reaction sphinganine + octadecanoyl-CoA = N-(octadecanoyl)-sphinganine + CoA + H(+). The catalysed reaction is 2-hydroxyoctadecanoyl-CoA + sphinganine = N-(2-hydroxyoctadecanoyl)-sphinganine + CoA + H(+). Its pathway is lipid metabolism; sphingolipid metabolism. Functionally, ceramide synthase that catalyzes the transfer of the acyl chain from acyl-CoA to a sphingoid base, with high selectivity toward very- and ultra-long-chain fatty acyl-CoA (chain length greater than C22). N-acylates sphinganine and sphingosine bases to form dihydroceramides and ceramides in de novo synthesis and salvage pathways, respectively. It is crucial for the synthesis of ultra-long-chain ceramides in the epidermis, to maintain epidermal lipid homeostasis and terminal differentiation. The polypeptide is Ceramide synthase 3 (Homo sapiens (Human)).